Reading from the N-terminus, the 200-residue chain is 3-isopropylmalate dehydratase small subunit (200 aa).

This sequence belongs to the LeuD family. LeuD type 1 subfamily. In terms of assembly, heterodimer of LeuC and LeuD.

The catalysed reaction is (2R,3S)-3-isopropylmalate = (2S)-2-isopropylmalate. It participates in amino-acid biosynthesis; L-leucine biosynthesis; L-leucine from 3-methyl-2-oxobutanoate: step 2/4. Functionally, catalyzes the isomerization between 2-isopropylmalate and 3-isopropylmalate, via the formation of 2-isopropylmaleate. The sequence is that of 3-isopropylmalate dehydratase small subunit from Vibrio campbellii (strain ATCC BAA-1116).